The primary structure comprises 288 residues: Alpha/beta hydrolase domain-containing protein 17B (288 aa).

Catalysis depends on charge relay system residues Ser-170, Asp-235, and His-264. Phosphoserine is present on Ser-282.

This sequence belongs to the AB hydrolase superfamily. ABHD17 family. In terms of processing, palmitoylated on cysteine residues located in a cysteine cluster at the N-terminus which promotes membrane localization. Palmitoylation is required for post-synaptic localization and for depalmitoylating activity towards DLG4/PSD95.

It is found in the cell membrane. The protein resides in the recycling endosome membrane. Its subcellular location is the cell projection. It localises to the dendritic spine. The protein localises to the postsynaptic density membrane. The enzyme catalyses S-hexadecanoyl-L-cysteinyl-[protein] + H2O = L-cysteinyl-[protein] + hexadecanoate + H(+). Its activity is regulated as follows. Inhibited by palmostatin-B. Hydrolyzes fatty acids from S-acylated cysteine residues in proteins. Has depalmitoylating activity towards DLG4/PSD95. Has depalmitoylating activity towards GAP43. Has depalmitoylating activity towards MAP6. Has depalmitoylating activity towards NRAS. This is Alpha/beta hydrolase domain-containing protein 17B from Homo sapiens (Human).